A 245-amino-acid chain; its full sequence is Heavy metal-associated isoprenylated plant protein 1 (245 aa).

The 65-residue stretch at 28-92 folds into the HMA 1 domain; sequence PVHVVLKIDF…KLQKKSKKKV (65 aa). Residues cysteine 39 and cysteine 42 each coordinate a metal cation. A disordered region spans residues 91 to 113; the sequence is KVELISPKPKKDTKENNEKKAND. Basic and acidic residues predominate over residues 99–113; sequence PKKDTKENNEKKAND. Residues 121 to 188 form the HMA 2 domain; it reads VTTVVLKVNC…KLKKTVQVVP (68 aa). A metal cation contacts are provided by cysteine 132 and cysteine 135. Cysteine 242 bears the Cysteine methyl ester mark. Residue cysteine 242 is the site of S-farnesyl cysteine attachment. A propeptide spans 243–245 (removed in mature form); the sequence is SVM.

The protein belongs to the HIPP family.

Its function is as follows. Heavy-metal-binding protein. The polypeptide is Heavy metal-associated isoprenylated plant protein 1 (Arabidopsis thaliana (Mouse-ear cress)).